Reading from the N-terminus, the 217-residue chain is 7-cyano-7-deazaguanine synthase (217 aa).

7–17 (LSGGMDSTTLL) lines the ATP pocket. 4 residues coordinate Zn(2+): Cys-183, Cys-191, Cys-194, and Cys-197.

Belongs to the QueC family. Zn(2+) is required as a cofactor.

It carries out the reaction 7-carboxy-7-deazaguanine + NH4(+) + ATP = 7-cyano-7-deazaguanine + ADP + phosphate + H2O + H(+). Its pathway is purine metabolism; 7-cyano-7-deazaguanine biosynthesis. Catalyzes the ATP-dependent conversion of 7-carboxy-7-deazaguanine (CDG) to 7-cyano-7-deazaguanine (preQ(0)). This chain is 7-cyano-7-deazaguanine synthase, found in Methanoregula boonei (strain DSM 21154 / JCM 14090 / 6A8).